We begin with the raw amino-acid sequence, 193 residues long: Large ribosomal subunit protein bL21 (193 aa).

It belongs to the bacterial ribosomal protein bL21 family. In terms of assembly, part of the 50S ribosomal subunit. Contacts protein L20.

In terms of biological role, this protein binds to 23S rRNA in the presence of protein L20. The protein is Large ribosomal subunit protein bL21 of Ruegeria pomeroyi (strain ATCC 700808 / DSM 15171 / DSS-3) (Silicibacter pomeroyi).